The primary structure comprises 390 residues: GDSL esterase/lipase At1g28580 (390 aa).

The first 28 residues, 1–28, serve as a signal peptide directing secretion; sequence MAYPGSPILMKLLVFIFLSTFVVTNVSS. Serine 44 serves as the catalytic Nucleophile. N-linked (GlcNAc...) asparagine glycosylation is found at asparagine 140 and asparagine 322. Residues aspartate 347 and histidine 350 contribute to the active site.

Belongs to the 'GDSL' lipolytic enzyme family.

The protein localises to the secreted. In Arabidopsis thaliana (Mouse-ear cress), this protein is GDSL esterase/lipase At1g28580.